A 159-amino-acid chain; its full sequence is Type IV major alpha-pilin (159 aa).

Positions 1 to 6 are cleaved as a propeptide — leader sequence; the sequence is MNAQKG. Position 7 is an N-methylphenylalanine (phenylalanine 7). Residues 7–27 form a helical membrane-spanning segment; it reads FTLIELMIVIAIIGILAAIAL. Residues 64–87 form a disordered region; sequence VLSEESSTSKENIGLTSSETSTKP. Polar residues predominate over residues 67-87; it reads EESSTSKENIGLTSSETSTKP. A disulfide bond links cysteine 137 and cysteine 156.

Belongs to the N-Me-Phe pilin family. In terms of assembly, major component of the type IV pilus (T4P) that plays a role in surface and attachment to the host epithelial tissues.

The protein localises to the fimbrium. It localises to the membrane. In Moraxella bovis, this protein is Type IV major alpha-pilin (tfpI).